The following is a 225-amino-acid chain: Cytidylate kinase (225 aa).

An ATP-binding site is contributed by 11–19 (GPAAAGKST).

This sequence belongs to the cytidylate kinase family. Type 1 subfamily.

Its subcellular location is the cytoplasm. It carries out the reaction CMP + ATP = CDP + ADP. The catalysed reaction is dCMP + ATP = dCDP + ADP. This is Cytidylate kinase from Bacillus cereus (strain B4264).